Consider the following 191-residue polypeptide: Elongation factor P (191 aa).

Lysine 34 bears the N6-(3,6-diaminohexanoyl)-5-hydroxylysine mark.

Belongs to the elongation factor P family. May be beta-lysylated on the epsilon-amino group of Lys-34 by the combined action of EpmA and EpmB, and then hydroxylated on the C5 position of the same residue by EpmC (if this protein is present). Lysylation is critical for the stimulatory effect of EF-P on peptide-bond formation. The lysylation moiety may extend toward the peptidyltransferase center and stabilize the terminal 3-CCA end of the tRNA. Hydroxylation of the C5 position on Lys-34 may allow additional potential stabilizing hydrogen-bond interactions with the P-tRNA.

It is found in the cytoplasm. It participates in protein biosynthesis; polypeptide chain elongation. In terms of biological role, involved in peptide bond synthesis. Alleviates ribosome stalling that occurs when 3 or more consecutive Pro residues or the sequence PPG is present in a protein, possibly by augmenting the peptidyl transferase activity of the ribosome. Modification of Lys-34 is required for alleviation. This Marinomonas sp. (strain MWYL1) protein is Elongation factor P.